We begin with the raw amino-acid sequence, 106 residues long: Movement protein TGB2 (106 aa).

Over 1–9 (MPLTPPPDH) the chain is Cytoplasmic. The chain crosses the membrane as a helical span at residues 10-30 (TKVLLVAAIGLSIVASILTYS). Residues 31–71 (RNTLPQVGDHSHLLPHGGVYKDGTKTIVYGGPRKLNSLEGG) lie on the Lumenal side of the membrane. The chain crosses the membrane as a helical span at residues 72-92 (FNLPVQPWFLVILLSAAIFLL). The Cytoplasmic segment spans residues 93–106 (SCRSGHRRVCGQCH).

The protein belongs to the Tymovirales TGBp2 protein family.

The protein resides in the host endoplasmic reticulum membrane. Plays a role in viral cell-to-cell propagation, by facilitating genome transport to neighboring plant cells through plasmosdesmata,. The polypeptide is Movement protein TGB2 (Chrysanthemum morifolium (Florist's daisy)).